The primary structure comprises 191 residues: dCTP deaminase, dUMP-forming (191 aa).

Residues 101-106 (KSSLGR), aspartate 119, 127-129 (TLE), glutamine 148, tyrosine 162, and glutamine 174 each bind dCTP. The Proton donor/acceptor role is filled by glutamate 129. Positions 163–191 (GSPVYGSRYQGQRGPTPSRSWQNFHRTKI) are disordered. Residues 171 to 191 (YQGQRGPTPSRSWQNFHRTKI) show a composition bias toward polar residues.

It belongs to the dCTP deaminase family. Homotrimer.

It carries out the reaction dCTP + 2 H2O = dUMP + NH4(+) + diphosphate. It participates in pyrimidine metabolism; dUMP biosynthesis; dUMP from dCTP: step 1/1. Bifunctional enzyme that catalyzes both the deamination of dCTP to dUTP and the hydrolysis of dUTP to dUMP without releasing the toxic dUTP intermediate. This Acidothermus cellulolyticus (strain ATCC 43068 / DSM 8971 / 11B) protein is dCTP deaminase, dUMP-forming.